The primary structure comprises 636 residues: LDL receptor repeat-containing protein egg-1 (636 aa).

The Cytoplasmic portion of the chain corresponds to 1–130; it reads MSSIAQKNRN…NHSNLFQCPS (130 aa). A helical; Signal-anchor for type II membrane protein transmembrane segment spans residues 131–151; that stretch reads VAIVLVLALVILGVLAAIPLT. Residues 152–636 are Extracellular-facing; sequence LMLTSSAQKM…VLKNSGRFPY (485 aa). A glycan (N-linked (GlcNAc...) asparagine) is linked at Asn-202. LDL-receptor class A domains are found at residues 205 to 243, 244 to 296, 298 to 335, 336 to 375, 378 to 415, 457 to 499, 503 to 541, and 542 to 579; these read TCSG…ENCK, ECQS…AMCK, TCSK…NNCN, KCQK…QQCD, TCSG…ENCP, KCHP…KNCT, ECGI…QNCS, and QCAS…LKCS. Disulfide bonds link Cys-213–Cys-233, Cys-227–Cys-242, Cys-245–Cys-273, Cys-251–Cys-286, Cys-280–Cys-295, Cys-299–Cys-312, Cys-306–Cys-325, Cys-319–Cys-334, Cys-337–Cys-365, Cys-359–Cys-374, Cys-379–Cys-392, Cys-387–Cys-405, Cys-399–Cys-414, Cys-458–Cys-476, Cys-466–Cys-489, Cys-483–Cys-498, Cys-504–Cys-518, Cys-514–Cys-531, Cys-525–Cys-540, Cys-543–Cys-556, Cys-550–Cys-569, and Cys-563–Cys-578. N-linked (GlcNAc...) asparagine glycosylation is present at Asn-508. Asn-614 carries N-linked (GlcNAc...) asparagine glycosylation.

It is found in the cell membrane. Functionally, probable receptor which is required for the oocyte-to-zygote transition although its exact function is controversial. Seems to be required for fertilization probably by promoting the interaction or fusion between sperm and oocyte. Conversely, shown to be dispensable for fertilization but required for the formation of a continuous and cohesive eggshell chitin layer by maintaining a homogenous distribution of chitin synthase chs-1 at the unfertilized oocyte cell membrane. Appears to recruit or maintain together to the unfertilized oocyte cortex several proteins including chs-1, kinase mbk-2 and pseudophosphatases egg-3, and possibly egg-4 and egg-5. The polypeptide is LDL receptor repeat-containing protein egg-1 (Caenorhabditis briggsae).